The sequence spans 200 residues: Glycerol-3-phosphate acyltransferase (200 aa).

Transmembrane regions (helical) follow at residues 1–21, 51–71, 84–104, 116–136, and 159–179; these read MITVILIFSAYLLGSISFAVV, VAAAVTLLGDAGKGWVAVVVA, VIASAALAVFLGHLFPIFLAF, ILLGLNLWLGILAILTWIIVA, and FLLQKEMLTITVLIISILLIL.

It belongs to the PlsY family. As to quaternary structure, probably interacts with PlsX.

Its subcellular location is the cell inner membrane. The catalysed reaction is an acyl phosphate + sn-glycerol 3-phosphate = a 1-acyl-sn-glycero-3-phosphate + phosphate. It functions in the pathway lipid metabolism; phospholipid metabolism. Its function is as follows. Catalyzes the transfer of an acyl group from acyl-phosphate (acyl-PO(4)) to glycerol-3-phosphate (G3P) to form lysophosphatidic acid (LPA). This enzyme utilizes acyl-phosphate as fatty acyl donor, but not acyl-CoA or acyl-ACP. This Nitrosomonas eutropha (strain DSM 101675 / C91 / Nm57) protein is Glycerol-3-phosphate acyltransferase.